Consider the following 260-residue polypeptide: NH(3)-dependent NAD(+) synthetase (260 aa).

ATP is bound at residue 31-38 (GLSGGLDS). Residue Asp-37 coordinates Mg(2+). Residue Arg-112 coordinates deamido-NAD(+). Thr-132 provides a ligand contact to ATP. Glu-137 contacts Mg(2+). Residues Lys-161 and Ser-183 each coordinate ATP.

The protein belongs to the NAD synthetase family. Homodimer.

The enzyme catalyses deamido-NAD(+) + NH4(+) + ATP = AMP + diphosphate + NAD(+) + H(+). It participates in cofactor biosynthesis; NAD(+) biosynthesis; NAD(+) from deamido-NAD(+) (ammonia route): step 1/1. In terms of biological role, catalyzes the ATP-dependent amidation of deamido-NAD to form NAD. Uses ammonia as a nitrogen source. This chain is NH(3)-dependent NAD(+) synthetase, found in Helicobacter pylori (strain HPAG1).